A 474-amino-acid polypeptide reads, in one-letter code: 3-isopropylmalate dehydratase large subunit (474 aa).

Residues cysteine 355, cysteine 415, and cysteine 418 each coordinate [4Fe-4S] cluster.

It belongs to the aconitase/IPM isomerase family. LeuC type 1 subfamily. As to quaternary structure, heterodimer of LeuC and LeuD. [4Fe-4S] cluster is required as a cofactor.

It carries out the reaction (2R,3S)-3-isopropylmalate = (2S)-2-isopropylmalate. Its pathway is amino-acid biosynthesis; L-leucine biosynthesis; L-leucine from 3-methyl-2-oxobutanoate: step 2/4. In terms of biological role, catalyzes the isomerization between 2-isopropylmalate and 3-isopropylmalate, via the formation of 2-isopropylmaleate. The polypeptide is 3-isopropylmalate dehydratase large subunit (Shewanella sp. (strain MR-7)).